Consider the following 184-residue polypeptide: Putative NAD(P)H nitroreductase HI_1542 (184 aa).

Residues 10 to 12, arginine 35, and histidine 39 contribute to the FMN site; that span reads RKS. 122–127 contributes to the NAD(+) binding site; the sequence is AAQAQG. Residue 132 to 134 participates in FMN binding; that stretch reads WIS.

This sequence belongs to the nitroreductase family. As to quaternary structure, homodimer. It depends on FMN as a cofactor.

The polypeptide is Putative NAD(P)H nitroreductase HI_1542 (Haemophilus influenzae (strain ATCC 51907 / DSM 11121 / KW20 / Rd)).